The following is a 243-amino-acid chain: Protein DMP8 (243 aa).

The segment at 1–37 (MEKTEESVGIRVYTTTTTQNPSPTSSRSPKPVPLSSL) is disordered. Over residues 14 to 29 (TTTTTQNPSPTSSRSP) the composition is skewed to low complexity. A run of 4 helical transmembrane segments spans residues 70–90 (MLVNFLPTGTLLMFEMVLPTI), 98–118 (GINTLMIHLLLLLCAMSCFFF), 174–194 (VNDFVHSVMSVLVFMAIAFSD), and 212–232 (VMESFPLMVGIVCSALFLVFP).

The protein belongs to the plant DMP1 protein family. In terms of tissue distribution, restricted to flowers.

It is found in the endoplasmic reticulum membrane. Its subcellular location is the vacuole membrane. Involved in membrane remodeling. The protein is Protein DMP8 of Arabidopsis thaliana (Mouse-ear cress).